We begin with the raw amino-acid sequence, 379 residues long: MSEPLDLNQLAQKIKQWGLELGFQQVGITDTDLSESEPKLQAWLDKQYHGEMDWMARHGMLRARPHELLPGTLRVISVRMNYLPANAAFASTLKNPKLGYVSRYALGRDYHKLLRNRLKKLGEMIQQHCVSLNFRPFVDSAPILERPLAEKAGLGWTGKHSLILNREAGSFFFLGELLVDIPLPVDQPVEEGCGKCVACMTICPTGAIVEPYTVDARRCISYLTIELEGAIPEELRPLMGNRIYGCDDCQLICPWNRYSQLTTEEDFSPRKPLHAPELIELFAWSEEKFLKVTEGSAIRRIGHLRWLRNIAVALGNAPWDETILTALESRKGEHPLLDEHIAWAIAQQIERRNACIVEVQLPKKQRLVRVIEKGLPRDA.

Residue D139 is the Proton donor of the active site. Positions 181 to 213 (IPLPVDQPVEEGCGKCVACMTICPTGAIVEPYT) constitute a 4Fe-4S ferredoxin-type domain. [4Fe-4S] cluster-binding residues include C193, C196, C199, C203, C219, C246, C249, and C253.

This sequence belongs to the QueG family. As to quaternary structure, monomer. Cob(II)alamin serves as cofactor. Requires [4Fe-4S] cluster as cofactor.

Its subcellular location is the cytoplasm. It carries out the reaction epoxyqueuosine(34) in tRNA + AH2 = queuosine(34) in tRNA + A + H2O. It participates in tRNA modification; tRNA-queuosine biosynthesis. Catalyzes the conversion of epoxyqueuosine (oQ) to queuosine (Q), which is a hypermodified base found in the wobble positions of tRNA(Asp), tRNA(Asn), tRNA(His) and tRNA(Tyr). This chain is Epoxyqueuosine reductase, found in Escherichia coli (strain K12).